We begin with the raw amino-acid sequence, 157 residues long: MFDVLMYLFETYIHTEAELRVDQDKLEQDLTNAGFDREDIYNALLWLEKLADYQEGLAEPMQLASDPLSMRIYTPEECERLDASCRGFLLFLEQIQVLNLETREMVIERVLALDTAEFDLEDLKWVILMVLFNIPGCENAYQQMEELLFEVNEGMLH.

The protein belongs to the Smg family.

This Escherichia coli O7:K1 (strain IAI39 / ExPEC) protein is Protein Smg.